Here is a 224-residue protein sequence, read N- to C-terminus: Ankyrin repeat domain-containing protein 45 (224 aa).

ANK repeat units follow at residues 46–76 (VGRN…DVNE) and 80–109 (RGYS…DFQA).

As to expression, widely expressed.

It localises to the cytoplasm. It is found in the midbody. Its subcellular location is the midbody ring. The protein resides in the cleavage furrow. Its function is as follows. May play a role during cell division. The protein is Ankyrin repeat domain-containing protein 45 of Danio rerio (Zebrafish).